A 415-amino-acid polypeptide reads, in one-letter code: Acetylornithine aminotransferase (415 aa).

Residues 115–116 and F148 each bind pyridoxal 5'-phosphate; that span reads GA. R151 contacts N(2)-acetyl-L-ornithine. 239-242 contacts pyridoxal 5'-phosphate; sequence DEVQ. At K268 the chain carries N6-(pyridoxal phosphate)lysine. S295 contacts N(2)-acetyl-L-ornithine. T296 contacts pyridoxal 5'-phosphate.

Belongs to the class-III pyridoxal-phosphate-dependent aminotransferase family. ArgD subfamily. In terms of assembly, homodimer. Pyridoxal 5'-phosphate serves as cofactor.

The protein resides in the cytoplasm. It carries out the reaction N(2)-acetyl-L-ornithine + 2-oxoglutarate = N-acetyl-L-glutamate 5-semialdehyde + L-glutamate. The protein operates within amino-acid biosynthesis; L-arginine biosynthesis; N(2)-acetyl-L-ornithine from L-glutamate: step 4/4. This is Acetylornithine aminotransferase from Prochlorococcus marinus subsp. pastoris (strain CCMP1986 / NIES-2087 / MED4).